Here is a 486-residue protein sequence, read N- to C-terminus: Methionine aminopeptidase 2-2 (486 aa).

Basic and acidic residues predominate over residues 1-10 (MGSKSPEGHR). The tract at residues 1–120 (MGSKSPEGHR…ALPATELKQT (120 aa)) is disordered. Positions 46–56 (GDDDDDEDAEE) are enriched in acidic residues. Positions 93–108 (KKKKRKKSNKKKKKTK) are enriched in basic residues. Substrate is bound at residue histidine 238. A divalent metal cation contacts are provided by aspartate 259, aspartate 270, and histidine 339. Histidine 347 contributes to the substrate binding site. Residues glutamate 372 and glutamate 467 each contribute to the a divalent metal cation site.

It belongs to the peptidase M24A family. Methionine aminopeptidase eukaryotic type 2 subfamily. Co(2+) serves as cofactor. The cofactor is Zn(2+). Mn(2+) is required as a cofactor. It depends on Fe(2+) as a cofactor.

It is found in the cytoplasm. The catalysed reaction is Release of N-terminal amino acids, preferentially methionine, from peptides and arylamides.. Cotranslationally removes the N-terminal methionine from nascent proteins. The N-terminal methionine is often cleaved when the second residue in the primary sequence is small and uncharged (Met-Ala-, Cys, Gly, Pro, Ser, Thr, or Val). In Aspergillus fumigatus (strain ATCC MYA-4609 / CBS 101355 / FGSC A1100 / Af293) (Neosartorya fumigata), this protein is Methionine aminopeptidase 2-2.